The following is a 326-amino-acid chain: Biotin synthase (326 aa).

The 230-residue stretch at 50 to 279 (FNGEKVDVEQ…ESVIKISGGR (230 aa)) folds into the Radical SAM core domain. Positions 68, 72, and 75 each coordinate [4Fe-4S] cluster. [2Fe-2S] cluster is bound by residues cysteine 112, cysteine 145, cysteine 204, and lysine 274.

The protein belongs to the radical SAM superfamily. Biotin synthase family. In terms of assembly, homodimer. It depends on [4Fe-4S] cluster as a cofactor. [2Fe-2S] cluster is required as a cofactor.

The enzyme catalyses (4R,5S)-dethiobiotin + (sulfur carrier)-SH + 2 reduced [2Fe-2S]-[ferredoxin] + 2 S-adenosyl-L-methionine = (sulfur carrier)-H + biotin + 2 5'-deoxyadenosine + 2 L-methionine + 2 oxidized [2Fe-2S]-[ferredoxin]. It functions in the pathway cofactor biosynthesis; biotin biosynthesis; biotin from 7,8-diaminononanoate: step 2/2. Functionally, catalyzes the conversion of dethiobiotin (DTB) to biotin by the insertion of a sulfur atom into dethiobiotin via a radical-based mechanism. The sequence is that of Biotin synthase from Nitrosopumilus maritimus (strain SCM1).